The sequence spans 343 residues: D-alanine--D-alanine ligase (343 aa).

One can recognise an ATP-grasp domain in the interval 129 to 335 (KYVLEHFNIK…YSKLIDELIE (207 aa)). 162 to 217 (ENKLGYAVFIKPSNSGSSVGITKAHNRKELEAGLEEAMKYDRKILVEEALNAREIE) contributes to the ATP binding site. 3 residues coordinate Mg(2+): aspartate 288, glutamate 302, and asparagine 304.

This sequence belongs to the D-alanine--D-alanine ligase family. It depends on Mg(2+) as a cofactor. Mn(2+) serves as cofactor.

The protein resides in the cytoplasm. It carries out the reaction 2 D-alanine + ATP = D-alanyl-D-alanine + ADP + phosphate + H(+). It functions in the pathway cell wall biogenesis; peptidoglycan biosynthesis. Cell wall formation. The sequence is that of D-alanine--D-alanine ligase from Clostridium acetobutylicum (strain ATCC 824 / DSM 792 / JCM 1419 / IAM 19013 / LMG 5710 / NBRC 13948 / NRRL B-527 / VKM B-1787 / 2291 / W).